Reading from the N-terminus, the 301-residue chain is NADH-cytochrome b5 reductase 3 (301 aa).

Glycine 2 is lipidated: N-myristoyl glycine. The FAD-binding FR-type domain occupies 40–152 (DIKYSLRLID…RGPNGLLVYQ (113 aa)). Residue lysine 42 is modified to N6-acetyllysine. Residue tyrosine 43 is modified to Phosphotyrosine. Residues arginine 92, proline 93, tyrosine 94, valine 109, lysine 111, and phenylalanine 114 each contribute to the FAD site. Lysine 120 carries the post-translational modification N6-acetyllysine. 4 residues coordinate FAD: lysine 126, methionine 127, serine 128, and threonine 185.

The protein belongs to the flavoprotein pyridine nucleotide cytochrome reductase family. Component of a complex composed of cytochrome b5, NADH-cytochrome b5 reductase (CYB5R3) and MTARC2. Interacts with MTLN; the interaction is required to maintain cellular lipid composition and leads to stimulation of mitochondrial respiratory complex I activity. FAD is required as a cofactor.

It localises to the endoplasmic reticulum membrane. The protein resides in the mitochondrion outer membrane. It carries out the reaction 2 Fe(III)-[cytochrome b5] + NADH = 2 Fe(II)-[cytochrome b5] + NAD(+) + H(+). Functionally, catalyzes the reduction of two molecules of cytochrome b5 using NADH as the electron donor. This is NADH-cytochrome b5 reductase 3 (CYB5R3) from Macaca fascicularis (Crab-eating macaque).